We begin with the raw amino-acid sequence, 263 residues long: HTH-type transcriptional repressor NanR (263 aa).

The tract at residues 1–25 (MDVMNAFDSQAEDSPTSLGRSLRRR) is disordered. The 69-residue stretch at 30 to 98 (KKLSEMVEEE…NGERARVSRP (69 aa)) folds into the HTH gntR-type domain. The H-T-H motif DNA-binding region spans 58-77 (ERELMAFFNVGRPSVREALA).

This sequence belongs to the NanR family.

Transcriptional repressor that controls expression of the genes required for the catabolism of sialic acids. This Salmonella choleraesuis (strain SC-B67) protein is HTH-type transcriptional repressor NanR.